The sequence spans 883 residues: Envelope glycoprotein B (883 aa).

Residues 1-31 form the signal peptide; sequence MQSYIAVNIDMASLKMLICVCVAILIPSTLS. The Virion surface portion of the chain corresponds to 32 to 750; it reads QDSHGIAGII…SGIASFLSNP (719 aa). 5 cysteine pairs are disulfide-bonded: cysteine 77–cysteine 535, cysteine 94–cysteine 491, cysteine 167–cysteine 229, cysteine 321–cysteine 369, and cysteine 558–cysteine 608. N-linked (GlcNAc...) asparagine; by host glycans are attached at residues asparagine 102 and asparagine 121. The tract at residues 134-140 is involved in fusion and/or binding to host membrane; the sequence is TWALFSR. N-linked (GlcNAc...) asparagine; by host glycosylation occurs at asparagine 211. The segment at 216–223 is involved in fusion and/or binding to host membrane; sequence HQTLGYRT. N-linked (GlcNAc...) asparagine; by host glycosylation is found at asparagine 262 and asparagine 360. The tract at residues 428–457 is disordered; that stretch reads QNHLPRGRERRQAAGRRTASLQSGPQGDRI. N-linked (GlcNAc...) asparagine; by host glycosylation is found at asparagine 579, asparagine 635, and asparagine 649. Hydrophobic membrane proximal region regions lie at residues 694–748 and 724–744; these read IDTV…SFLS and ALGTVVMTAAAAVISTVSGIA. A helical transmembrane segment spans residues 751 to 771; that stretch reads FAALGIGIAVVVSIILGLLAF. Over 772–883 the chain is Intravirion; that stretch reads KYVMNLKSNP…PSWAEESEDE (112 aa). The disordered stretch occupies residues 791-817; the sequence is PPAGTPPRPSRRYYKDEEEVEEDSDED. Over residues 806-817 the composition is skewed to acidic residues; that stretch reads DEEEVEEDSDED. The Internalization motif signature appears at 868–871; it reads YPLL.

Belongs to the herpesviridae glycoprotein B family. In terms of assembly, homotrimer; disulfide-linked. Binds to heparan sulfate proteoglycans. Interacts with gH/gL heterodimer. A proteolytic cleavage by host furin generates two subunits that remain linked by disulfide bonds.

Its subcellular location is the virion membrane. The protein localises to the host cell membrane. It is found in the host endosome membrane. It localises to the host Golgi apparatus membrane. In terms of biological role, envelope glycoprotein that forms spikes at the surface of virion envelope. Essential for the initial attachment to heparan sulfate moieties of the host cell surface proteoglycans. Involved in fusion of viral and cellular membranes leading to virus entry into the host cell. Following initial binding to its host receptors, membrane fusion is mediated by the fusion machinery composed at least of gB and the heterodimer gH/gL. May be involved in the fusion between the virion envelope and the outer nuclear membrane during virion egress. This Gallus gallus (Chicken) protein is Envelope glycoprotein B.